Reading from the N-terminus, the 307-residue chain is tRNA dimethylallyltransferase (307 aa).

10-17 contacts ATP; that stretch reads GPTASGKS. Residue 12–17 participates in substrate binding; that stretch reads TASGKS. Interaction with substrate tRNA regions lie at residues 35–38 and 159–163; these read DSMQ and QRLCR.

It belongs to the IPP transferase family. Monomer. Mg(2+) is required as a cofactor.

The enzyme catalyses adenosine(37) in tRNA + dimethylallyl diphosphate = N(6)-dimethylallyladenosine(37) in tRNA + diphosphate. Catalyzes the transfer of a dimethylallyl group onto the adenine at position 37 in tRNAs that read codons beginning with uridine, leading to the formation of N6-(dimethylallyl)adenosine (i(6)A). In Phenylobacterium zucineum (strain HLK1), this protein is tRNA dimethylallyltransferase.